Consider the following 103-residue polypeptide: Stefin-3 (103 aa).

The Secondary area of contact signature appears at 52-56 (QVVAG).

This sequence belongs to the cystatin family.

The protein localises to the cytoplasm. Functionally, this is an intracellular thiol proteinase inhibitor. The chain is Stefin-3 (Stfa3) from Mus musculus (Mouse).